A 1482-amino-acid polypeptide reads, in one-letter code: Cystic fibrosis transmembrane conductance regulator (1482 aa).

The Cytoplasmic portion of the chain corresponds to 1–77 (MQKSPLERAS…KLINALRRCF (77 aa)). Residues 78-98 (FWRFVFYGILLYLGEVTKAVQ) traverse the membrane as a helical segment. The region spanning 81 to 365 (FVFYGILLYL…WAVQTWYDSL (285 aa)) is the ABC transmembrane type-1 1 domain. At 99 to 122 (PLLLGRIIASYDPDNKVERSIAIY) the chain is on the extracellular side. Residues 123–146 (LAIGLCLLFIVRTLLLHPAIFGLH) form a helical membrane-spanning segment. Over 147–195 (HMGMQMRIAMFSLIYKKTLKLSSRVLDKISIGQLVSLLSNNLNKFDEGL) the chain is Cytoplasmic. The helical transmembrane segment at 196–216 (ALAHFVWIAPLQVTLLMGLIW) threads the bilayer. Residues 217-222 (DLLQAS) are Extracellular-facing. The helical transmembrane segment at 223–243 (AFCGLAFLIIVALGQAGLGRM) threads the bilayer. Residues 244–298 (MMKYRDKRAGKINERLVITSEMIENIQSVKAYCWEEAMEKMIENLRQIELRLTRK) are Cytoplasmic-facing. Residues 299–319 (AAYVRYFNSAAFFFSGFFVVF) form a helical membrane-spanning segment. Topologically, residues 320–339 (LSVLPYAMLKGIILRKIFTT) are extracellular. Residues 340–358 (ISFCIVLRMAVTRQFPWAV) traverse the membrane as a helical segment. The Cytoplasmic segment spans residues 359-858 (QTWYDSLGAI…YLRYVTVHKS (500 aa)). ATP contacts are provided by residues Trp401, Ser434, 458–465 (GSTGAGKT), and Gln493. Residues 423 to 646 (NGDNSLFFSN…RPDFSSELMG (224 aa)) enclose the ABC transporter 1 domain. Residue Cys524 is the site of S-palmitoyl cysteine attachment. Phosphoserine occurs at positions 549 and 660. Residues 654-831 (SAERRNSILT…EEINEEDLKE (178 aa)) form a disordered R region region. Ser670 carries the phosphoserine; by PKA modification. Phosphoserine is present on Ser685. Lys687 is covalently cross-linked (Glycyl lysine isopeptide (Lys-Gly) (interchain with G-Cter in ubiquitin)). Ser699 and Ser711 each carry phosphoserine. A Phosphothreonine modification is found at Thr716. Residues Ser736, Ser767, Ser790, Ser795, and Ser813 each carry the phosphoserine modification. Residues 859 to 879 (LIFVLIWCLVVFLAEVAVSLV) traverse the membrane as a helical segment. The ABC transmembrane type-1 2 domain occupies 859–1156 (LIFVLIWCLV…AVNSSIDVDS (298 aa)). The Extracellular portion of the chain corresponds to 880–919 (VLYLLRTSSLQDKGNNTTVNANSSYGVIVTNTSSYYLLYI). N-linked (GlcNAc...) asparagine glycans are attached at residues Asn894, Asn895, Asn901, and Asn910. The discontinuously helical transmembrane segment at 920-940 (YVGIADSLFALAIFRGLPLVH) threads the bilayer. At 941 to 991 (TLIKVSKTLHHKMLRSILQAPMSTFNTLKAGRILNRFSKDIAILDDLLPLT) the chain is on the cytoplasmic side. The chain crosses the membrane as a helical span at residues 992–1012 (MFDFIQLLLIVIGAVVVVSVL). Topologically, residues 1013 to 1014 (QP) are extracellular. The chain crosses the membrane as a helical span at residues 1015-1035 (YIFLATVPVIAAFIILRAYFL). Residues 1036-1096 (HTSQQLKQLE…TANWFLYLST (61 aa)) are Cytoplasmic-facing. Residues 1097–1117 (LRWFQMRIEIIFVIFFIAVTF) traverse the membrane as a helical segment. At 1118 to 1131 (VSILTTGEGEGTIG) the chain is on the extracellular side. Residues 1132 to 1152 (IILTLAMNIMNTLQWAVNSSI) traverse the membrane as a helical segment. At 1153 to 1482 (DVDSLMRSVS…TEEEVQETRL (330 aa)) the chain is on the cytoplasmic side. One can recognise an ABC transporter 2 domain in the interval 1212 to 1445 (MTVKDLTAKY…KSLFRQAISP (234 aa)). ATP-binding positions include Tyr1221 and 1246-1253 (GRTGSGKS). Residues 1388–1482 (RTLKQAFADC…TEEEVQETRL (95 aa)) form an interaction with GORASP2 region. The S-palmitoyl cysteine moiety is linked to residue Cys1397. The segment covering 1454–1463 (HRNSSRHRSR) has biased composition (basic residues). Residues 1454–1482 (HRNSSRHRSRSQIAALKEETEEEVQETRL) are disordered. Ser1458 is modified (phosphoserine). Residues 1472 to 1482 (ETEEEVQETRL) show a composition bias toward acidic residues. The PDZ-binding signature appears at 1480-1482 (TRL).

It belongs to the ABC transporter superfamily. ABCC family. CFTR transporter (TC 3.A.1.202) subfamily. Monomer; does not require oligomerization for channel activity. May form oligomers in the membrane. Interacts with SLC26A3, SLC26A6 and NHERF1. Interacts with SHANK2. Interacts with MYO6. Interacts (via C-terminus) with GOPC (via PDZ domain); this promotes CFTR internalization and thereby decreases channel activity. Interacts with SLC4A7 through NHERF1. Found in a complex with MYO5B and RAB11A. Interacts with ANO1. Interacts with SLC26A8. Interacts with AHCYL1; the interaction increases CFTR activity. Interacts with CSE1L. The core-glycosylated form interacts with GORASP2 (via PDZ GRASP-type 1 domain) in respone to ER stress. Interacts with MARCHF2; the interaction leads to CFTR ubiqtuitination and degradation. Interacts with ADGRG2. Post-translationally, N-glycosylated. Phosphorylated; cAMP treatment promotes phosphorylation and activates the channel. Dephosphorylation decreases the ATPase activity (in vitro). Phosphorylation at PKA sites activates the channel. Phosphorylation at PKC sites enhances the response to phosphorylation by PKA. Phosphorylated by AMPK; this inhibits channel activity. In terms of processing, ubiquitinated, leading to its degradation in the lysosome. Deubiquitination by USP10 in early endosomes enhances its endocytic recycling to the cell membrane. Ubiquitinated by RNF185 during ER stress. Ubiquitinated by MARCHF2.

It localises to the apical cell membrane. It is found in the early endosome membrane. Its subcellular location is the cell membrane. The protein resides in the recycling endosome membrane. The protein localises to the endoplasmic reticulum membrane. It localises to the nucleus. The enzyme catalyses ATP + H2O + closed Cl(-) channel = ADP + phosphate + open Cl(-) channel.. It catalyses the reaction chloride(in) = chloride(out). The catalysed reaction is hydrogencarbonate(in) = hydrogencarbonate(out). It carries out the reaction ATP + H2O = ADP + phosphate + H(+). Epithelial ion channel that plays an important role in the regulation of epithelial ion and water transport and fluid homeostasis. Mediates the transport of chloride ions across the cell membrane. Possesses an intrinsic ATPase activity and utilizes ATP to gate its channel; the passive flow of anions through the channel is gated by cycles of ATP binding and hydrolysis by the ATP-binding domains. The ion channel is also permeable to HCO(3)(-); selectivity depends on the extracellular chloride concentration. Exerts its function also by modulating the activity of other ion channels and transporters. Contributes to the regulation of the pH and the ion content of the epithelial fluid layer. Modulates the activity of the epithelial sodium channel (ENaC) complex, in part by regulating the cell surface expression of the ENaC complex. May regulate bicarbonate secretion and salvage in epithelial cells by regulating the transporter SLC4A7. Can inhibit the chloride channel activity of ANO1. Plays a role in the chloride and bicarbonate homeostasis during sperm epididymal maturation and capacitation. The polypeptide is Cystic fibrosis transmembrane conductance regulator (Loxodonta africana (African elephant)).